Consider the following 403-residue polypeptide: Accessory Sec system protein translocase subunit SecY2 (403 aa).

The next 10 helical transmembrane spans lie at 17 to 37 (MLYTCFILFIYILGTNISIVS), 63 to 83 (LNIFTLGLVPWLTSMIILMLI), 105 to 125 (ILTLILSVIQSYFVIHEYVSK), 131 to 151 (DNIYLTILILVTGTMLLVWLA), 157 to 177 (YGIAGPMPIVMVSIIKSMMHQ), 186 to 206 (HIVIALLIILVIITLFILLFI), 240 to 260 (ITLMMSISAFVFLKSGIHFIL), 276 to 296 (FDSPVGISVYLVIQMLLGYFL), 339 to 359 (WFGSALVTVIIGIPLYFTLFV), and 366 to 386 (IYFSVQLIVLVYISINIAETI).

The protein belongs to the SecY/SEC61-alpha family. SecY2 subfamily. As to quaternary structure, component of the accessory SecA2/SecY2 protein translocase complex required to export cell wall proteins. May form heterotrimers with SecE and SecG subunits.

It localises to the cell membrane. In terms of biological role, part of the accessory SecA2/SecY2 system specifically required for export of possible cell wall proteins. The central subunit of a protein translocation channel. The protein is Accessory Sec system protein translocase subunit SecY2 of Staphylococcus aureus (strain N315).